Consider the following 155-residue polypeptide: Ribosomal RNA large subunit methyltransferase H (155 aa).

S-adenosyl-L-methionine contacts are provided by residues leucine 72, glycine 103, and 122–127 (LSPLTF).

Belongs to the RNA methyltransferase RlmH family. In terms of assembly, homodimer.

It is found in the cytoplasm. The catalysed reaction is pseudouridine(1915) in 23S rRNA + S-adenosyl-L-methionine = N(3)-methylpseudouridine(1915) in 23S rRNA + S-adenosyl-L-homocysteine + H(+). Functionally, specifically methylates the pseudouridine at position 1915 (m3Psi1915) in 23S rRNA. This Alkalilimnicola ehrlichii (strain ATCC BAA-1101 / DSM 17681 / MLHE-1) protein is Ribosomal RNA large subunit methyltransferase H.